The following is a 215-amino-acid chain: Deoxyribose-phosphate aldolase (215 aa).

The active-site Proton donor/acceptor is the aspartate 89. Lysine 150 (schiff-base intermediate with acetaldehyde) is an active-site residue. Lysine 174 functions as the Proton donor/acceptor in the catalytic mechanism.

The protein belongs to the DeoC/FbaB aldolase family. DeoC type 1 subfamily.

It is found in the cytoplasm. The catalysed reaction is 2-deoxy-D-ribose 5-phosphate = D-glyceraldehyde 3-phosphate + acetaldehyde. It participates in carbohydrate degradation; 2-deoxy-D-ribose 1-phosphate degradation; D-glyceraldehyde 3-phosphate and acetaldehyde from 2-deoxy-alpha-D-ribose 1-phosphate: step 2/2. In terms of biological role, catalyzes a reversible aldol reaction between acetaldehyde and D-glyceraldehyde 3-phosphate to generate 2-deoxy-D-ribose 5-phosphate. The sequence is that of Deoxyribose-phosphate aldolase from Natronomonas pharaonis (strain ATCC 35678 / DSM 2160 / CIP 103997 / JCM 8858 / NBRC 14720 / NCIMB 2260 / Gabara) (Halobacterium pharaonis).